Here is a 289-residue protein sequence, read N- to C-terminus: tRNA dimethylallyltransferase (289 aa).

9 to 16 is a binding site for ATP; sequence GTTASGKT. 11–16 is a binding site for substrate; that stretch reads TASGKT. The tract at residues 34-37 is interaction with substrate tRNA; sequence DSLC.

This sequence belongs to the IPP transferase family. In terms of assembly, monomer. The cofactor is Mg(2+).

The catalysed reaction is adenosine(37) in tRNA + dimethylallyl diphosphate = N(6)-dimethylallyladenosine(37) in tRNA + diphosphate. Catalyzes the transfer of a dimethylallyl group onto the adenine at position 37 in tRNAs that read codons beginning with uridine, leading to the formation of N6-(dimethylallyl)adenosine (i(6)A). This Campylobacter jejuni (strain RM1221) protein is tRNA dimethylallyltransferase.